The sequence spans 544 residues: Chaperonin GroEL (544 aa).

ATP contacts are provided by residues 29 to 32 (TMGP), Lys50, 86 to 90 (DGTTT), Gly414, 477 to 479 (NAA), and Asp493. Residues 525–544 (DKPAMPSMPDMGGMGMPGMM) form a disordered region.

This sequence belongs to the chaperonin (HSP60) family. As to quaternary structure, forms a cylinder of 14 subunits composed of two heptameric rings stacked back-to-back. Interacts with the co-chaperonin GroES.

Its subcellular location is the cytoplasm. The enzyme catalyses ATP + H2O + a folded polypeptide = ADP + phosphate + an unfolded polypeptide.. Its function is as follows. Together with its co-chaperonin GroES, plays an essential role in assisting protein folding. The GroEL-GroES system forms a nano-cage that allows encapsulation of the non-native substrate proteins and provides a physical environment optimized to promote and accelerate protein folding. In Aliarcobacter butzleri (strain RM4018) (Arcobacter butzleri), this protein is Chaperonin GroEL.